A 1138-amino-acid polypeptide reads, in one-letter code: Envelopment polyprotein (1138 aa).

A signal peptide spans Met1–Ala18. Residues Met19–Thr487 are Lumenal-facing. Intrachain disulfides connect Cys30-Cys155, Cys64-Cys161, Cys113-Cys132, Cys137-Cys142, Cys179-Cys189, Cys214-Cys250, Cys239-Cys354, Cys379-Cys438, Cys383-Cys392, Cys408-Cys427, and Cys455-Cys478. Asn138 carries an N-linked (GlcNAc...) asparagine; by host glycan. An N-linked (GlcNAc...) asparagine; by host glycan is attached at Asn350. N-linked (GlcNAc...) asparagine; by host glycosylation occurs at Asn402. The helical transmembrane segment at Val488 to Ile508 threads the bilayer. Over Leu509–Cys630 the chain is Cytoplasmic. The tract at residues Cys519–Lys536 is binding to the ribonucleoprotein. 2 consecutive CCHC-type zinc fingers follow at residues Cys548–Cys568 and Cys573–Cys594. Binding to the ribonucleoprotein stretches follow at residues Tyr591–Leu608, Lys595–Lys606, and Lys614–Ser628. Positions Lys610–Cys637 are interaction with host TRAF3. The ITAM domain occupies Lys614 to Cys637. 2 positions are modified to phosphotyrosine: Tyr618 and Tyr631. A YxxL motif is present at residues Tyr618–Leu621. Residues Tyr631–Ala651 traverse the membrane as a helical segment. The Lumenal segment spans residues Glu652–Asn1107. Cystine bridges form between Cys738/Cys773, Cys742/Cys780, Cys754/Cys887, Cys768/Cys898, Cys783/Cys906, Cys809/Cys818, Cys826/Cys835, and Cys866/Cys870. Residues Tyr760–Cys780 form a fusion loop region. N-linked (GlcNAc...) asparagine; by host glycosylation occurs at Asn930. 5 disulfides stabilise this stretch: Cys972-Cys1002, Cys995-Cys1047, Cys1012-Cys1017, Cys1048-Cys1053, and Cys1087-Cys1091. The chain crosses the membrane as a helical span at residues Trp1108–Leu1128. The binding to the ribonucleoprotein stretch occupies residues Met1124 to Val1138. Topologically, residues Cys1129 to Val1138 are cytoplasmic.

The protein belongs to the hantavirus envelope glycoprotein family. In terms of assembly, homodimer. Homotetramer; forms heterotetrameric Gn-Gc spikes in the pre-fusion conformation. Interacts (via C-terminus) with the nucleoprotein. Interacts with host TUFM; this interaction contributes to the virus-induced degradation of mitochondria by autophagy, which leads to degradation of host MAVS and inhibition of type I interferon (IFN) responses. Interacts with host MAP1LC3B; this interaction contributes to the virus-induced degradation of mitochondria by autophagy, which leads to degradation of host MAVS and inhibition of type I interferon (IFN) responses. Interacts (via C-terminus) with host TRAF3; this interaction inhibits the formation of TRAF3-TBK1 complexes. Homodimer. Homotetramer; forms heterotetrameric Gn-Gc spikes in the pre-fusion conformation. Homotrimer; forms homotrimer in the post-fusion conformation at acidic pH. Interacts (via C-terminus) with the nucleoprotein. In terms of processing, envelope polyprotein precursor is quickly cleaved in vivo just after synthesis, presumably by host signal peptidase.

The protein localises to the virion membrane. It localises to the host cell surface. The protein resides in the host Golgi apparatus membrane. Its subcellular location is the host endoplasmic reticulum membrane. It is found in the host mitochondrion. Its function is as follows. Forms homotetramers with glycoprotein C at the surface of the virion. Attaches the virion to host cell receptors including integrin ITGAV/ITGB3. This attachment induces virion internalization possibly through clathrin-dependent endocytosis and dynamin-independent macropinocytosis. Mediates the assembly and budding of infectious virus particles through its interaction with the nucleocapsid protein and the viral genome. May dysregulate normal immune and endothelial cell responses through an ITAM motif. Translocates to mitochondria, binds to host TUFM and recruits MAP1LC3B. These interactions induce mitochondrial autophagy and therefore destruction of host MAVS leading to inhibition of type I interferon (IFN) responses. Concomitant breakdown of glycoprotein N is apparently prevented by the nucleoprotein that may inhibit Gn-stimulated autophagosome-lysosome fusion. Interacts with the viral genomic RNA. Inhibits the host RIG-I/TBK1 pathway by disrupting the formation of TBK1-TRAF3 complexes and downstream signaling responses required for IFN-beta transcription. Functionally, forms homotetramers with glycoprotein N at the surface of the virion. Attaches the virion to host cell receptors including integrin ITGAV/ITGB3. This attachment induces virion internalization predominantly through clathrin-dependent endocytosis. Class II fusion protein that promotes fusion of viral membrane with host endosomal membrane after endocytosis of the virion. This Abrothrix longipilis (Long-haired grass mouse) protein is Envelopment polyprotein (GP).